We begin with the raw amino-acid sequence, 945 residues long: Kinesin-like protein CIN8 (945 aa).

Positions 22 to 409 constitute a Kinesin motor domain; the sequence is NITVAVRCRG…LEYAAKAKNI (388 aa). 114–121 is an ATP binding site; sequence GMTSTGKT. The interval 190 to 243 is disordered; that stretch reads IFDSSSMNHSSRASSQSNSPREPEVAHNGFSRRRQRPPPVKANRMSATKQQLSE. Residues 193-208 are compositionally biased toward low complexity; sequence SSSMNHSSRASSQSNS. Residues 234–243 are compositionally biased toward polar residues; that stretch reads MSATKQQLSE. Coiled coils occupy residues 450–562 and 634–675; these read MSHE…DIKE and LKEF…YLDQ.

The protein belongs to the TRAFAC class myosin-kinesin ATPase superfamily. Kinesin family. BimC subfamily.

Its subcellular location is the cytoplasm. The protein resides in the cytoskeleton. The protein localises to the spindle. Its function is as follows. Elongates the mitotic spindle by interacting with spindle microtubules to generate an outward force pushing spindle poles apart. Following spindle assembly, CIN8 and KIP1 apparently act to oppose a force, possibly generated by KAR3, that draws separated poles back together. The protein is Kinesin-like protein CIN8 (CIN8) of Eremothecium gossypii (strain ATCC 10895 / CBS 109.51 / FGSC 9923 / NRRL Y-1056) (Yeast).